The chain runs to 357 residues: MAEFKFTDLVEPVAVDKKTALRITVLGGGSFGTAMANLAARNGCDTMIWIRDAETAEEINKTHINKRYLPDFTLESSLRAVSDLEQAVCDRDIILVAIPSHSFRDVLKQIAPYITAQAVVSLTKGIEAKTFSFMSDIIREELPEVPYGVLSGPNLAKEIMAGMPSGTVIASDSELVRYAVQHALHSALFRVFGSDDVHGVELGGALKNIYAVAMGIGAAYKIGENTKSMILTRALAEMSRFAVKQGANPLTFLGLSGVGDLFATCNSPLSRNYQIGYALGSGKTLEQASKELGQTAEGINTIVQVRGKAQELDVYMPITNALYEVIFEGAPPLNIALSLMKNGHRSDVEFVLPHHEV.

Residues Ser-30, Phe-31, Arg-51, and Lys-124 each contribute to the NADPH site. 2 residues coordinate sn-glycerol 3-phosphate: Lys-124 and Gly-152. Position 156 (Ala-156) interacts with NADPH. Sn-glycerol 3-phosphate contacts are provided by Lys-207, Asp-260, Ser-270, Arg-271, and Asn-272. Lys-207 acts as the Proton acceptor in catalysis. Arg-271 provides a ligand contact to NADPH. Position 297 (Glu-297) interacts with NADPH.

It belongs to the NAD-dependent glycerol-3-phosphate dehydrogenase family.

It is found in the cytoplasm. The enzyme catalyses sn-glycerol 3-phosphate + NAD(+) = dihydroxyacetone phosphate + NADH + H(+). The catalysed reaction is sn-glycerol 3-phosphate + NADP(+) = dihydroxyacetone phosphate + NADPH + H(+). It functions in the pathway membrane lipid metabolism; glycerophospholipid metabolism. Functionally, catalyzes the reduction of the glycolytic intermediate dihydroxyacetone phosphate (DHAP) to sn-glycerol 3-phosphate (G3P), the key precursor for phospholipid synthesis. The protein is Glycerol-3-phosphate dehydrogenase [NAD(P)+] of Acinetobacter baumannii (strain SDF).